The following is an 890-amino-acid chain: Translation initiation factor IF-2 (890 aa).

Residues 45 to 304 (LIDHLNQKNS…LQQGFQKPAQ (260 aa)) form a disordered region. The span at 67–81 (STLNIPGTGGKSKSV) shows a compositional bias: polar residues. Residues 92-217 (VKRDPQEAER…RMAEENKWTD (126 aa)) show a composition bias toward basic and acidic residues. Over residues 252 to 266 (GRGRNAKAARPKKGN) the composition is skewed to basic residues. Basic and acidic residues predominate over residues 267-280 (KHAESKADREEARA). One can recognise a tr-type G domain in the interval 389-558 (PRAPVVTIMG…LLQAEVLELK (170 aa)). The segment at 398 to 405 (GHVDHGKT) is G1. 398-405 (GHVDHGKT) is a GTP binding site. Residues 423-427 (GITQH) are G2. The tract at residues 444-447 (DTPG) is G3. GTP contacts are provided by residues 444–448 (DTPGH) and 498–501 (NKID). Residues 498-501 (NKID) form a G4 region. The tract at residues 534 to 536 (SAK) is G5. K808 bears the N6-acetyllysine mark.

This sequence belongs to the TRAFAC class translation factor GTPase superfamily. Classic translation factor GTPase family. IF-2 subfamily.

Its subcellular location is the cytoplasm. Its function is as follows. One of the essential components for the initiation of protein synthesis. Protects formylmethionyl-tRNA from spontaneous hydrolysis and promotes its binding to the 30S ribosomal subunits. Also involved in the hydrolysis of GTP during the formation of the 70S ribosomal complex. This is Translation initiation factor IF-2 from Escherichia coli (strain 55989 / EAEC).